Consider the following 189-residue polypeptide: CASP-like protein 1U2 (189 aa).

Over 1–24 the chain is Cytoplasmic; it reads MFGSDDSGCHVMDDDVAPPANGSK. A helical transmembrane segment spans residues 25–45; that stretch reads AVTLLLRLITLALALTSAVLM. The Extracellular segment spans residues 46 to 71; the sequence is ATASECTIYGLDGATATTVTFKDYQP. A helical transmembrane segment spans residues 72–92; sequence FIYLVGSNIAATILEVAAIYV. Topologically, residues 93–109 are cytoplasmic; it reads QVGKGDDVEDAPMIPRV. A helical membrane pass occupies residues 110 to 130; it reads VLVVVDVAVQMLLYSATGAVF. Residues 131–158 lie on the Extracellular side of the membrane; the sequence is AAVMAYGPQISACTGAAGHFCEQVQRSK. The chain crosses the membrane as a helical span at residues 159 to 179; that stretch reads IISLAASLSAVLAAVAKDVAL. The Cytoplasmic segment spans residues 180–189; it reads PCSVWPHPSS.

Belongs to the Casparian strip membrane proteins (CASP) family. Homodimer and heterodimers.

It is found in the cell membrane. The polypeptide is CASP-like protein 1U2 (Sorghum bicolor (Sorghum)).